The sequence spans 570 residues: Sulfite reductase [NADPH] hemoprotein beta-component (570 aa).

Residues cysteine 434, cysteine 440, cysteine 479, and cysteine 483 each contribute to the [4Fe-4S] cluster site. Cysteine 483 is a binding site for siroheme.

Belongs to the nitrite and sulfite reductase 4Fe-4S domain family. In terms of assembly, alpha(8)-beta(8). The alpha component is a flavoprotein, the beta component is a hemoprotein. It depends on siroheme as a cofactor. [4Fe-4S] cluster is required as a cofactor.

The enzyme catalyses hydrogen sulfide + 3 NADP(+) + 3 H2O = sulfite + 3 NADPH + 4 H(+). It participates in sulfur metabolism; hydrogen sulfide biosynthesis; hydrogen sulfide from sulfite (NADPH route): step 1/1. Component of the sulfite reductase complex that catalyzes the 6-electron reduction of sulfite to sulfide. This is one of several activities required for the biosynthesis of L-cysteine from sulfate. This is Sulfite reductase [NADPH] hemoprotein beta-component from Salmonella agona (strain SL483).